A 204-amino-acid chain; its full sequence is Tetraspanin-13 (204 aa).

Topologically, residues 1-19 (MVCGGFACSKNCLCALNLL) are cytoplasmic. The chain crosses the membrane as a helical span at residues 20–40 (YTLVSLLLIGIAAWGIGFGLI). The Extracellular segment spans residues 41–44 (SSLR). Residues 45 to 65 (VVGVVIAVGIFLFLIALVGLI) form a helical membrane-spanning segment. Over 66–72 (GAVKHHQ) the chain is Cytoplasmic. Residues 73–93 (VLLFFYMIILLLVFIVQFSVS) traverse the membrane as a helical segment. The Extracellular portion of the chain corresponds to 94 to 167 (CACLALNQEQ…IGRYAGEVLR (74 aa)). N-linked (GlcNAc...) asparagine glycans are attached at residues asparagine 113 and asparagine 137. Phosphoserine is present on serine 143. A helical transmembrane segment spans residues 168–188 (FVGGIGLFFSFTEILGVWLTY). Residues 189–204 (RYRNQKDPRANPSAFL) lie on the Cytoplasmic side of the membrane.

It belongs to the tetraspanin (TM4SF) family.

It is found in the membrane. The chain is Tetraspanin-13 (TSPAN13) from Bos taurus (Bovine).